The following is a 210-amino-acid chain: MKKEIASHLLEIGAVFLQPNDPFTWSSGMKSPIYCDNRLTLSYPKVRQAIAAGLEELIKEHFPTVEVIAGTATAGIAHAAWVSDRMDLPMCYVRSKAKGHGKGNQIEGKAEKGQKVVVVEDLISTGGSAITCVEALREAGCEVLGIVSIFTYELESGKEKLEAANVASYSLSDYSALTEVAAEKGMIGQAETKKLQEWRKNPADEAWITA.

Residues Arg-94, Lys-98, His-100, and 120–128 (EDLISTGGS) each bind 5-phospho-alpha-D-ribose 1-diphosphate. Ser-124 is a binding site for orotate.

Belongs to the purine/pyrimidine phosphoribosyltransferase family. PyrE subfamily. In terms of assembly, homodimer. Mg(2+) is required as a cofactor.

The catalysed reaction is orotidine 5'-phosphate + diphosphate = orotate + 5-phospho-alpha-D-ribose 1-diphosphate. It functions in the pathway pyrimidine metabolism; UMP biosynthesis via de novo pathway; UMP from orotate: step 1/2. Its function is as follows. Catalyzes the transfer of a ribosyl phosphate group from 5-phosphoribose 1-diphosphate to orotate, leading to the formation of orotidine monophosphate (OMP). In Bacillus cereus (strain G9842), this protein is Orotate phosphoribosyltransferase.